Reading from the N-terminus, the 62-residue chain is Pelophylaxin-4 (62 aa).

Positions 1-22 are cleaved as a signal peptide; it reads MLTLKKSMLLIFFLGTINFSLC. Positions 23-45 are excised as a propeptide; it reads EQERNADEEERRDEPEERDVEVQ. Residue Leu-60 is modified to Leucine amide. Gly-61 is a propeptide.

In terms of tissue distribution, expressed by the skin glands.

It is found in the secreted. In terms of biological role, antimicrobial peptide. This chain is Pelophylaxin-4, found in Pelophylax fukienensis (Fukien gold-striped pond frog).